Reading from the N-terminus, the 386-residue chain is Methylthioribose-1-phosphate isomerase (386 aa).

Aspartate 255 functions as the Proton donor in the catalytic mechanism.

This sequence belongs to the eIF-2B alpha/beta/delta subunits family. MtnA subfamily.

The protein localises to the cytoplasm. The protein resides in the nucleus. The enzyme catalyses 5-(methylsulfanyl)-alpha-D-ribose 1-phosphate = 5-(methylsulfanyl)-D-ribulose 1-phosphate. It participates in amino-acid biosynthesis; L-methionine biosynthesis via salvage pathway; L-methionine from S-methyl-5-thio-alpha-D-ribose 1-phosphate: step 1/6. In terms of biological role, catalyzes the interconversion of methylthioribose-1-phosphate (MTR-1-P) into methylthioribulose-1-phosphate (MTRu-1-P). This chain is Methylthioribose-1-phosphate isomerase, found in Trypanosoma brucei brucei (strain 927/4 GUTat10.1).